The chain runs to 86 residues: Secreted transmembrane peptide 6 (86 aa).

Residues 1–31 (MGMKSPNIAAFMLPLLLILFTLSSQLKVVES) form the signal peptide. The short motif at 45–58 (IVYTPPSRSCGTSP) is the SCOOP motif element. Residues 51–53 (SRS) carry the SxS motif essential for MIK2 binding motif.

It belongs to the serine rich endogenous peptide (SCOOP) phytocytokine family. In terms of assembly, interacts with MIK2 (via extracellular leucine-rich repeat domain); this interaction triggers the formation of complex between MIK2 and the BAK1/SERK3 and SERK4 coreceptors, and subsequent BAK1 activation by phosphorylation. As to expression, mostly expressed in leaves, and, to a lower extent, in roots, stems, siliques, seeds and flowers.

It localises to the cell membrane. The protein resides in the secreted. Its subcellular location is the extracellular space. The protein localises to the apoplast. In terms of biological role, brassicaceae-specific phytocytokine (plant endogenous peptide released into the apoplast) perceived by MIK2 in a BAK1/SERK3 and SERK4 coreceptors-dependent manner, that modulates various physiological and antimicrobial processes including growth prevention and reactive oxygen species (ROS) response regulation. Prevents general growth and development. This chain is Secreted transmembrane peptide 6, found in Arabidopsis thaliana (Mouse-ear cress).